Consider the following 486-residue polypeptide: MKVFVHGWQHKISHTRILYSLRRFYHVETPFNQNIVSGRDLESTGFAWWSGNARLINVSGKLLGAHVAHAGIMVFWTGAMTLFEVAHFIPEKPLYEQGFILIPHLATLGWGVGPGGEIINIYPYFVVGILHLISSAVLGFGGLYHALIGPDTLEESFPFFGYDWRDKNKMTTILGIHLVLLGIGSFLLVIKALFFGGVYDTWAPGGGDVRLINNPTLNPAIIFGYVLKSPFGGDGWIVSVNNMEDLIGGHVWIGVVCIAGGIWHILTKPFAWARRAFVWSGEAYLSYSLGALSLMGLTASNYVWYNNTAYPSEFYGPTGPEASQAQAFTFLVRDQRLGANVASAQGPTGLGKYLMRSPSGEIIFGGETMRFWDLRAPWVEPLRGANGLDLNKIKNDIQPWQERRAAEYMTHAPLGSLNSVGGVATEINSVNYVSPRSWLTTSHFFLGFFLFIGHLWHAGRARAAAAGFEKGINRENEAVLSMRPLD.

A propeptide spanning residues 1-28 (MKVFVHGWQHKISHTRILYSLRRFYHVE) is cleaved from the precursor. The next 5 membrane-spanning stretches (helical) occupy residues 82-106 (LFEVAHFIPEKPLYEQGFILIPHLA), 147-168 (LIGPDTLEESFPFFGYDWRDKN), 191-213 (KALFFGGVYDTWAPGGGDVRLIN), 268-288 (KPFAWARRAFVWSGEAYLSYS), and 304-325 (WYNNTAYPSEFYGPTGPEASQA). A [CaMn4O5] cluster-binding site is contributed by glutamate 380. The helical transmembrane segment at 460–484 (RARAAAAGFEKGINRENEAVLSMRP) threads the bilayer.

This sequence belongs to the PsbB/PsbC family. PsbC subfamily. As to quaternary structure, PSII is composed of 1 copy each of membrane proteins PsbA, PsbB, PsbC, PsbD, PsbE, PsbF, PsbH, PsbI, PsbJ, PsbK, PsbL, PsbM, PsbT, PsbX, PsbY, PsbZ, Psb30/Ycf12, at least 3 peripheral proteins of the oxygen-evolving complex and a large number of cofactors. It forms dimeric complexes. The cofactor is Binds multiple chlorophylls and provides some of the ligands for the Ca-4Mn-5O cluster of the oxygen-evolving complex. It may also provide a ligand for a Cl- that is required for oxygen evolution. PSII binds additional chlorophylls, carotenoids and specific lipids..

The protein localises to the plastid. Its subcellular location is the chloroplast thylakoid membrane. In terms of biological role, one of the components of the core complex of photosystem II (PSII). It binds chlorophyll and helps catalyze the primary light-induced photochemical processes of PSII. PSII is a light-driven water:plastoquinone oxidoreductase, using light energy to abstract electrons from H(2)O, generating O(2) and a proton gradient subsequently used for ATP formation. This chain is Photosystem II CP43 reaction center protein, found in Gracilaria tenuistipitata var. liui (Red alga).